A 147-amino-acid chain; its full sequence is Large ribosomal subunit protein bL9 (147 aa).

It belongs to the bacterial ribosomal protein bL9 family.

Functionally, binds to the 23S rRNA. The chain is Large ribosomal subunit protein bL9 from Clostridium botulinum (strain 657 / Type Ba4).